A 177-amino-acid polypeptide reads, in one-letter code: ATP synthase subunit delta (177 aa).

Belongs to the ATPase delta chain family. As to quaternary structure, F-type ATPases have 2 components, F(1) - the catalytic core - and F(0) - the membrane proton channel. F(1) has five subunits: alpha(3), beta(3), gamma(1), delta(1), epsilon(1). F(0) has three main subunits: a(1), b(2) and c(10-14). The alpha and beta chains form an alternating ring which encloses part of the gamma chain. F(1) is attached to F(0) by a central stalk formed by the gamma and epsilon chains, while a peripheral stalk is formed by the delta and b chains.

It localises to the cell inner membrane. F(1)F(0) ATP synthase produces ATP from ADP in the presence of a proton or sodium gradient. F-type ATPases consist of two structural domains, F(1) containing the extramembraneous catalytic core and F(0) containing the membrane proton channel, linked together by a central stalk and a peripheral stalk. During catalysis, ATP synthesis in the catalytic domain of F(1) is coupled via a rotary mechanism of the central stalk subunits to proton translocation. In terms of biological role, this protein is part of the stalk that links CF(0) to CF(1). It either transmits conformational changes from CF(0) to CF(1) or is implicated in proton conduction. In Neisseria meningitidis serogroup C (strain 053442), this protein is ATP synthase subunit delta.